The chain runs to 134 residues: Arsenate reductase 1 (134 aa).

Residues cysteine 11, cysteine 83, and cysteine 90 each act as nucleophile in the active site. 2 cysteine pairs are disulfide-bonded: cysteine 11/cysteine 83 and cysteine 83/cysteine 90.

It belongs to the low molecular weight phosphotyrosine protein phosphatase family. Thioredoxin-coupled ArsC subfamily.

It is found in the cytoplasm. The enzyme catalyses arsenate + [thioredoxin]-dithiol + H(+) = arsenite + [thioredoxin]-disulfide + H2O. Functionally, catalyzes the reduction of arsenate [As(V)] to arsenite [As(III)]. This Bacillus cereus (strain ATCC 10987 / NRS 248) protein is Arsenate reductase 1.